Consider the following 712-residue polypeptide: Probable GTP diphosphokinase RSH3, chloroplastic (712 aa).

Residues 1–64 (MVVATTIALY…LLFSGASVKS (64 aa)) constitute a chloroplast transit peptide. Positions 65 to 74 (SSSSSSSHPS) are enriched in low complexity. Positions 65-84 (SSSSSSSHPSVGEELASIRH) are disordered. The HD domain occupies 237 to 338 (YLQHCVETAM…IKLADRLHNM (102 aa)).

The protein belongs to the RelA/SpoT family.

The protein localises to the plastid. It localises to the chloroplast. It catalyses the reaction GTP + ATP = guanosine 3'-diphosphate 5'-triphosphate + AMP. Functionally, probable ppGpp (guanosine 3'-diphosphate 5'-diphosphate) synthetase that may be involved in a rapid plant ppGpp-mediated response to pathogens and other stresses. The polypeptide is Probable GTP diphosphokinase RSH3, chloroplastic (RSH3) (Arabidopsis thaliana (Mouse-ear cress)).